The primary structure comprises 716 residues: ATP-dependent DNA helicase DinG (716 aa).

Residues 17–294 (ALQEQIPDFI…TCMEQFRPKT (278 aa)) enclose the Helicase ATP-binding domain. An ATP-binding site is contributed by 54–61 (APTGVGKT). C120 serves as a coordination point for [4Fe-4S] cluster. A DEAH box motif is present at residues 131–134 (EPTQ). [4Fe-4S] cluster-binding residues include C194, C199, and C205. The DEAH box motif lies at 248 to 251 (DEGH). The Helicase C-terminal domain occupies 517-698 (HIAEMAAFFR…VFPIEQPEVP (182 aa)).

This sequence belongs to the helicase family. DinG subfamily. Type 1 sub-subfamily. [4Fe-4S] cluster serves as cofactor.

It catalyses the reaction Couples ATP hydrolysis with the unwinding of duplex DNA at the replication fork by translocating in the 5'-3' direction. This creates two antiparallel DNA single strands (ssDNA). The leading ssDNA polymer is the template for DNA polymerase III holoenzyme which synthesizes a continuous strand.. The catalysed reaction is ATP + H2O = ADP + phosphate + H(+). Its function is as follows. DNA-dependent ATPase and 5'-3' DNA helicase. Unwinds D-loops, R-loops, forked DNA and G-quadruplex DNA. This chain is ATP-dependent DNA helicase DinG, found in Escherichia coli O6:H1 (strain CFT073 / ATCC 700928 / UPEC).